The chain runs to 209 residues: NADH-quinone oxidoreductase subunit C (209 aa).

It belongs to the complex I 30 kDa subunit family. NDH-1 is composed of 14 different subunits. Subunits NuoB, C, D, E, F, and G constitute the peripheral sector of the complex.

It is found in the cell inner membrane. The enzyme catalyses a quinone + NADH + 5 H(+)(in) = a quinol + NAD(+) + 4 H(+)(out). NDH-1 shuttles electrons from NADH, via FMN and iron-sulfur (Fe-S) centers, to quinones in the respiratory chain. The immediate electron acceptor for the enzyme in this species is believed to be ubiquinone. Couples the redox reaction to proton translocation (for every two electrons transferred, four hydrogen ions are translocated across the cytoplasmic membrane), and thus conserves the redox energy in a proton gradient. In Phenylobacterium zucineum (strain HLK1), this protein is NADH-quinone oxidoreductase subunit C.